The chain runs to 845 residues: Protein P (845 aa).

Positions 1–179 are terminal protein domain (TP); it reads MPLSYQHFRK…FCGSPYSWEQ (179 aa). Residues 180 to 348 form a spacer region; it reads ELQHGRLVIK…YCLSHLVNLR (169 aa). Residues 226–245 form a disordered region; it reads GLQPHQGPLASSQPGRSGSI. Positions 349-692 are polymerase/reverse transcriptase domain (RT); it reads EDWGPCDEHG…YMNLYPVARQ (344 aa). The Reverse transcriptase domain maps to 359–602; it reads EHHIRIPRTP…YSLNFMGYII (244 aa). Positions 431, 553, and 554 each coordinate Mg(2+).

The protein belongs to the hepadnaviridae P protein family.

It catalyses the reaction DNA(n) + a 2'-deoxyribonucleoside 5'-triphosphate = DNA(n+1) + diphosphate. It carries out the reaction Endonucleolytic cleavage to 5'-phosphomonoester.. With respect to regulation, activated by host HSP70 and HSP40 in vitro to be able to bind the epsilon loop of the pgRNA. Because deletion of the RNase H region renders the protein partly chaperone-independent, the chaperones may be needed indirectly to relieve occlusion of the RNA-binding site by this domain. Inhibited by several reverse-transcriptase inhibitors: Lamivudine, Adefovir and Entecavir. Multifunctional enzyme that converts the viral RNA genome into dsDNA in viral cytoplasmic capsids. This enzyme displays a DNA polymerase activity that can copy either DNA or RNA templates, and a ribonuclease H (RNase H) activity that cleaves the RNA strand of RNA-DNA heteroduplexes in a partially processive 3'- to 5'-endonucleasic mode. Neo-synthesized pregenomic RNA (pgRNA) are encapsidated together with the P protein, and reverse-transcribed inside the nucleocapsid. Initiation of reverse-transcription occurs first by binding the epsilon loop on the pgRNA genome, and is initiated by protein priming, thereby the 5'-end of (-)DNA is covalently linked to P protein. Partial (+)DNA is synthesized from the (-)DNA template and generates the relaxed circular DNA (RC-DNA) genome. After budding and infection, the RC-DNA migrates in the nucleus, and is converted into a plasmid-like covalently closed circular DNA (cccDNA). The activity of P protein does not seem to be necessary for cccDNA generation, and is presumably released from (+)DNA by host nuclear DNA repair machinery. The polypeptide is Protein P (Homo sapiens (Human)).